The primary structure comprises 267 residues: NAD kinase 1 (267 aa).

The active-site Proton acceptor is Asp45. NAD(+) is bound by residues 45 to 46 (DG), 122 to 123 (NE), Arg149, Asp151, and Ala186.

This sequence belongs to the NAD kinase family. A divalent metal cation is required as a cofactor.

Its subcellular location is the cytoplasm. The catalysed reaction is NAD(+) + ATP = ADP + NADP(+) + H(+). Involved in the regulation of the intracellular balance of NAD and NADP, and is a key enzyme in the biosynthesis of NADP. Catalyzes specifically the phosphorylation on 2'-hydroxyl of the adenosine moiety of NAD to yield NADP. This chain is NAD kinase 1, found in Oceanobacillus iheyensis (strain DSM 14371 / CIP 107618 / JCM 11309 / KCTC 3954 / HTE831).